Consider the following 120-residue polypeptide: UPF0231 protein YacL (120 aa).

Belongs to the UPF0231 family.

This Salmonella agona (strain SL483) protein is UPF0231 protein YacL.